Reading from the N-terminus, the 777-residue chain is BRCA1-associated RING domain protein 1 (777 aa).

Residues 1–32 (MPDNRQPRNRQPRIRSGNEPRSAPAMEPDGRG) are disordered. Residues 26–119 (MEPDGRGAWA…KLRNLLHDNE (94 aa)) are interaction with BRCA1. Residues 50–87 (CSRCTNILREPVCLGGCEHIFCSNCVSDCIGTGCPVCY) form an RING-type zinc finger. Glycyl lysine isopeptide (Lys-Gly) (interchain with G-Cter in SUMO2) cross-links involve residues Lys160 and Lys170. Positions 167–211 (PAIKKDASAQQDSYEFVSPSPPADVSERAKKASARSGKKQKKKTL) are disordered. Ser186 bears the Phosphoserine mark. The segment covering 197 to 209 (KASARSGKKQKKK) has biased composition (basic residues). Residue Thr299 is modified to Phosphothreonine. The interval 356-404 (NIPLPECSSPPSCKRKVGGTSGRKNSNMSDEFISLSPGTPPSTLSSSSY) is disordered. The segment covering 389–404 (SLSPGTPPSTLSSSSY) has biased composition (low complexity). The residue at position 391 (Ser391) is a Phosphoserine. Thr394 bears the Phosphothreonine mark. Lys423 is covalently cross-linked (Glycyl lysine isopeptide (Lys-Gly) (interchain with G-Cter in SUMO2)). 3 ANK repeats span residues 427 to 459 (RGET…VKDH), 460 to 492 (AGWT…TTGY), and 493 to 525 (QNDS…AVNI). One copy of the ANK 4; degenerate repeat lies at 526–546 (FGLRPVDYTDDESMKSLLLLP). Lys548 participates in a covalent cross-link: Glycyl lysine isopeptide (Lys-Gly) (interchain with G-Cter in SUMO2). The tract at residues 554–558 (ASHCS) is flexible linker. 2 BRCT domains span residues 560 to 653 (MNTG…KYEI) and 667 to 777 (LLPK…PLDS).

In terms of assembly, homo- and heterodimer. Heterodimer (RING-type zinc finger) with BRCA1. Heterodimer (via ANK repeats and BRCT domains) with CSTF1/CSTF-50. Component of the BRCA1-A complex, at least composed of the BRCA1, BARD1, UIMC1/RAP80, ABRAXAS1, BRCC3/BRCC36, BABAM2 and BABAM1/NBA1. Interacts with UBXN1. Processed during apoptosis. The homodimer is more susceptible to proteolytic cleavage than the BARD1/BRCA1 heterodimer.

It is found in the nucleus. The enzyme catalyses S-ubiquitinyl-[E2 ubiquitin-conjugating enzyme]-L-cysteine + [acceptor protein]-L-lysine = [E2 ubiquitin-conjugating enzyme]-L-cysteine + N(6)-ubiquitinyl-[acceptor protein]-L-lysine.. It participates in protein modification; protein ubiquitination. Its function is as follows. E3 ubiquitin-protein ligase. The BRCA1-BARD1 heterodimer specifically mediates the formation of 'Lys-6'-linked polyubiquitin chains and coordinates a diverse range of cellular pathways such as DNA damage repair, ubiquitination and transcriptional regulation to maintain genomic stability. Plays a central role in the control of the cell cycle in response to DNA damage. Acts by mediating ubiquitin E3 ligase activity that is required for its tumor suppressor function. Also forms a heterodimer with CSTF1/CSTF-50 to modulate mRNA processing and RNAP II stability by inhibiting pre-mRNA 3' cleavage. This chain is BRCA1-associated RING domain protein 1 (BARD1), found in Homo sapiens (Human).